Consider the following 310-residue polypeptide: Beta-1,3-galactosyltransferase 5 (310 aa).

The Cytoplasmic portion of the chain corresponds to 1–7 (MAFPKMR). The helical; Signal-anchor for type II membrane protein transmembrane segment at 8–28 (LMYICLLVLGALCLYFSMYSL) threads the bilayer. Topologically, residues 29–310 (NPFKEQSFVY…NSRGEDCPPV (282 aa)) are lumenal. N-linked (GlcNAc...) asparagine glycans are attached at residues N130, N174, and N231.

This sequence belongs to the glycosyltransferase 31 family. In terms of tissue distribution, expressed in stomach, jejunum, colon, pancreas, small intestine, testis and gastrointestinal and pancreatic cancer cell lines. Hardly detected in lung, liver, adrenal gland and peripheral blood leukocytes.

Its subcellular location is the golgi apparatus membrane. The enzyme catalyses a globoside Gb4Cer (d18:1(4E)) + UDP-alpha-D-galactose = a globoside GalGb4Cer (d18:1(4E)) + UDP + H(+). It participates in protein modification; protein glycosylation. Functionally, catalyzes the transfer of Gal to GlcNAc-based acceptors with a preference for the core3 O-linked glycan GlcNAc(beta1,3)GalNAc structure. Can use glycolipid LC3Cer as an efficient acceptor. This chain is Beta-1,3-galactosyltransferase 5, found in Homo sapiens (Human).